Here is a 375-residue protein sequence, read N- to C-terminus: Naringenin 7-O-methyltransferase (375 aa).

136–142 (LNLDKVF) is a substrate binding site. The segment at 168–188 (LFQYLGQDGNEPSNTLFNQAM) is substrate binding. Residues G219, D242, M263, and K276 each contribute to the S-adenosyl-L-methionine site. H280 functions as the Proton acceptor in the catalytic mechanism.

It belongs to the class I-like SAM-binding methyltransferase superfamily. Cation-independent O-methyltransferase family. COMT subfamily.

The catalysed reaction is (2S)-naringenin + S-adenosyl-L-methionine = (2S)-sakuranetin + S-adenosyl-L-homocysteine + H(+). In terms of biological role, S-adenosyl-L-methionine-dependent methyltransferase involved in the biosynthesis of the sakuranetin, an inducible defense mechanism of O.sativa against pathogen attack. The polypeptide is Naringenin 7-O-methyltransferase (Oryza sativa subsp. japonica (Rice)).